Consider the following 530-residue polypeptide: Ubiquitin carboxyl-terminal hydrolase 17-like protein 10 (530 aa).

Positions 80-375 (AGLQNMGNTC…QAYVLFYIQK (296 aa)) constitute a USP domain. Residue cysteine 89 is the Nucleophile of the active site. Residue histidine 334 is the Proton acceptor of the active site. Composition is skewed to basic and acidic residues over residues 382–392 (SESVSRGREPR) and 398–410 (DTDRRATQGELKR). 2 disordered regions span residues 382-410 (SESVSRGREPRALGVEDTDRRATQGELKR) and 477-530 (NHHP…LVCQ). Residues 484–495 (SSLLNLSSTTPT) show a composition bias toward low complexity. Polar residues predominate over residues 496-505 (DQESMNTGTL). The segment covering 510 to 524 (GRTRRSKGKNKHSKR) has biased composition (basic residues).

Belongs to the peptidase C19 family. USP17 subfamily.

The protein resides in the nucleus. Its subcellular location is the endoplasmic reticulum. It carries out the reaction Thiol-dependent hydrolysis of ester, thioester, amide, peptide and isopeptide bonds formed by the C-terminal Gly of ubiquitin (a 76-residue protein attached to proteins as an intracellular targeting signal).. Its function is as follows. Deubiquitinating enzyme that removes conjugated ubiquitin from specific proteins to regulate different cellular processes that may include cell proliferation, progression through the cell cycle, apoptosis, cell migration, and the cellular response to viral infection. This chain is Ubiquitin carboxyl-terminal hydrolase 17-like protein 10 (USP17L10), found in Homo sapiens (Human).